We begin with the raw amino-acid sequence, 233 residues long: Gamma-interferon-responsive lysosomal thiol protein (233 aa).

Residues 1–26 (MVSSSLTKLVFFGCLLLLTFTDNLVA) form the signal peptide. C42 and C45 are disulfide-bonded. 2 N-linked (GlcNAc...) asparagine glycosylation sites follow: N80 and N207. A propeptide spans 200–233 (TTLPKVCNSSASMSKSPERKWKLQVSYANKATNY) (removed in mature form).

This sequence belongs to the GILT family. As to quaternary structure, dimer; disulfide-linked. In terms of tissue distribution, expressed in the outer integument of seed coat.

It is found in the secreted. The protein resides in the lysosome. In terms of biological role, lysosomal thiol reductase that can reduce protein disulfide bonds. May facilitate the complete unfolding of proteins destined for lysosomal degradation. This is Gamma-interferon-responsive lysosomal thiol protein from Arabidopsis thaliana (Mouse-ear cress).